We begin with the raw amino-acid sequence, 172 residues long: Protein GrpE (172 aa).

Residues 1 to 23 (MNQDHPECDSEELTQNSPETDPL) form a disordered region.

Belongs to the GrpE family. As to quaternary structure, homodimer.

It localises to the cytoplasm. Functionally, participates actively in the response to hyperosmotic and heat shock by preventing the aggregation of stress-denatured proteins, in association with DnaK and GrpE. It is the nucleotide exchange factor for DnaK and may function as a thermosensor. Unfolded proteins bind initially to DnaJ; upon interaction with the DnaJ-bound protein, DnaK hydrolyzes its bound ATP, resulting in the formation of a stable complex. GrpE releases ADP from DnaK; ATP binding to DnaK triggers the release of the substrate protein, thus completing the reaction cycle. Several rounds of ATP-dependent interactions between DnaJ, DnaK and GrpE are required for fully efficient folding. In Xylella fastidiosa (strain M23), this protein is Protein GrpE.